The primary structure comprises 211 residues: Uridine kinase (211 aa).

12–19 lines the ATP pocket; sequence GGSGSGKT.

The protein belongs to the uridine kinase family.

It is found in the cytoplasm. The enzyme catalyses uridine + ATP = UMP + ADP + H(+). The catalysed reaction is cytidine + ATP = CMP + ADP + H(+). Its pathway is pyrimidine metabolism; CTP biosynthesis via salvage pathway; CTP from cytidine: step 1/3. The protein operates within pyrimidine metabolism; UMP biosynthesis via salvage pathway; UMP from uridine: step 1/1. This Geobacillus kaustophilus (strain HTA426) protein is Uridine kinase.